A 413-amino-acid chain; its full sequence is Autophagy-related protein 18 (413 aa).

5 WD repeats span residues 1–36, 69–114, 141–182, 185–225, and 230–269; these read MAMN…KSYE, KRQS…LLYT, PHKA…AINV, AHRS…KLYQ, and SIPS…SSES. Residues 226–230 carry the L/FRRG motif motif; that stretch reads FRRGS. Over residues 263–289 the composition is skewed to low complexity; it reads QGQSSESSLPSPSAPQRSMSQSSLSNS. A disordered region spans residues 263-315; it reads QGQSSESSLPSPSAPQRSMSQSSLSNSPDEDETSGDKDSSEFHSRKHNGTLMG. The segment covering 296–305 has biased composition (basic and acidic residues); it reads SGDKDSSEFH. WD repeat units follow at residues 308 to 354 and 366 to 406; these read KHNG…AWIK and GNTG…GGEG.

It belongs to the WD repeat PROPPIN family. Component of the PI(3,5)P2 regulatory complex.

The protein localises to the preautophagosomal structure membrane. Its subcellular location is the vacuole membrane. The protein resides in the endosome membrane. The PI(3,5)P2 regulatory complex regulates both the synthesis and turnover of phosphatidylinositol 3,5-bisphosphate (PtdIns(3,5)P2). Necessary for proper vacuole morphology. Plays an important role in osmotically-induced vacuole fragmentation. Required for cytoplasm to vacuole transport (Cvt) vesicle formation, pexophagy and starvation-induced autophagy. Involved in correct atg9 trafficking to the pre-autophagosomal structure. Might also be involved in premeiotic DNA replication. The protein is Autophagy-related protein 18 (atg18) of Aspergillus oryzae (strain ATCC 42149 / RIB 40) (Yellow koji mold).